Here is a 300-residue protein sequence, read N- to C-terminus: Glycine--tRNA ligase alpha subunit (300 aa).

This sequence belongs to the class-II aminoacyl-tRNA synthetase family. In terms of assembly, tetramer of two alpha and two beta subunits.

The protein resides in the cytoplasm. It carries out the reaction tRNA(Gly) + glycine + ATP = glycyl-tRNA(Gly) + AMP + diphosphate. This chain is Glycine--tRNA ligase alpha subunit (glyQ), found in Buchnera aphidicola subsp. Baizongia pistaciae (strain Bp).